The following is a 263-amino-acid chain: Hydroxyacylglutathione hydrolase (263 aa).

Residues H55, H57, D59, H60, H117, D134, and H172 each contribute to the Zn(2+) site.

Belongs to the metallo-beta-lactamase superfamily. Glyoxalase II family. As to quaternary structure, monomer. The cofactor is Zn(2+).

It carries out the reaction an S-(2-hydroxyacyl)glutathione + H2O = a 2-hydroxy carboxylate + glutathione + H(+). It functions in the pathway secondary metabolite metabolism; methylglyoxal degradation; (R)-lactate from methylglyoxal: step 2/2. Thiolesterase that catalyzes the hydrolysis of S-D-lactoyl-glutathione to form glutathione and D-lactic acid. The sequence is that of Hydroxyacylglutathione hydrolase from Shewanella baltica (strain OS155 / ATCC BAA-1091).